The chain runs to 342 residues: Transmembrane protein 268 (342 aa).

Helical transmembrane passes span 106-126 (AFAV…SQMF) and 133-153 (AGVL…VLVF). Positions 245 to 267 (VEGPEDLEDAPLLPSTPGPQERP) are disordered.

As to quaternary structure, interacts with ITGAM; this interaction inhibits ITGAM degradation via the endosome-lysosome pathway. Interacts with ITGB4; this interaction prevents ITGB4 degradation.

The protein resides in the cell membrane. Its function is as follows. Stabilizes cell surface expression of ITGAM and participates in the adhesion and migration of phagocytes during bacterial clearance. In Mus musculus (Mouse), this protein is Transmembrane protein 268.